We begin with the raw amino-acid sequence, 1040 residues long: Multidrug resistance protein MdtB (1040 aa).

12 consecutive transmembrane segments (helical) span residues 16-36 (FIMR…AGII), 347-367 (LMMA…NIPA), 369-389 (IIPG…MVFL), 396-416 (LTLM…IVVI), 440-460 (IGFT…PLLF), 472-492 (FAIT…TLTP), 537-557 (WLTL…WVFI), 863-883 (LGST…VLGI), 888-908 (FIHP…ALLA), 911-931 (IAGS…IGIV), 968-988 (ILMT…STGV), and 998-1018 (IGMV…TPVI).

The protein belongs to the resistance-nodulation-cell division (RND) (TC 2.A.6) family. MdtB subfamily. In terms of assembly, part of a tripartite efflux system composed of MdtA, MdtB and MdtC. MdtB forms a heteromultimer with MdtC.

Its subcellular location is the cell inner membrane. The MdtABC tripartite complex confers resistance against novobiocin and deoxycholate. This Escherichia coli O8 (strain IAI1) protein is Multidrug resistance protein MdtB.